The chain runs to 161 residues: MPSFDVVSEVDMQEVDNALHTTVKEITTRYDFKGSKASMERKEKEIILVAEDEYKLGQMIDLLSARLVKRGVDLKALEVGKVAAAAGGMERQVLSLKVGLETEVSKRMIKFLKDGKFKAQGSIQGDQLRVSGKSRDELQAAIAALRGHDFGLPVQFTNFRD.

This sequence belongs to the YajQ family.

In terms of biological role, nucleotide-binding protein. The polypeptide is Nucleotide-binding protein Lferr_1091 (Acidithiobacillus ferrooxidans (strain ATCC 53993 / BNL-5-31) (Leptospirillum ferrooxidans (ATCC 53993))).